We begin with the raw amino-acid sequence, 54 residues long: Ovomucoid (54 aa).

A Kazal-like domain is found at 4–54; sequence VDCSDYPKPVCSLEYMPLCGSDSKTYSNKCDFCNAFVDSNGTLSLSHFGKC. Disulfide bonds link Cys6–Cys36, Cys14–Cys33, and Cys22–Cys54. Asn43 carries an N-linked (GlcNAc...) asparagine glycan.

Its subcellular location is the secreted. This is Ovomucoid from Circus aeruginosus (Western marsh harrier).